Here is a 177-residue protein sequence, read N- to C-terminus: uncharacterized protein (177 aa).

The tract at residues 122-177 is disordered; sequence LPFTRNGSGQQSNKLRDPKKGRTHKPKPSEKHKKNKTGKKGAQEKTHRSRSSRKGN. Composition is skewed to basic residues over residues 142–160 and 168–177; these read GRTH…KTGK and HRSRSSRKGN.

This is an uncharacterized protein from Saccharomyces cerevisiae (strain ATCC 204508 / S288c) (Baker's yeast).